Consider the following 154-residue polypeptide: Myoglobin (154 aa).

The Globin domain occupies Gly-2–Lys-148. Ser-4 carries the post-translational modification Phosphoserine. Residue His-65 participates in nitrite binding. His-65 lines the O2 pocket. Thr-68 is modified (phosphothreonine). Position 94 (His-94) interacts with heme b.

Belongs to the globin family. As to quaternary structure, monomeric.

The protein localises to the cytoplasm. Its subcellular location is the sarcoplasm. The enzyme catalyses Fe(III)-heme b-[protein] + nitric oxide + H2O = Fe(II)-heme b-[protein] + nitrite + 2 H(+). The catalysed reaction is H2O2 + AH2 = A + 2 H2O. In terms of biological role, monomeric heme protein which primary function is to store oxygen and facilitate its diffusion within muscle tissues. Reversibly binds oxygen through a pentacoordinated heme iron and enables its timely and efficient release as needed during periods of heightened demand. Depending on the oxidative conditions of tissues and cells, and in addition to its ability to bind oxygen, it also has a nitrite reductase activity whereby it regulates the production of bioactive nitric oxide. Under stress conditions, like hypoxia and anoxia, it also protects cells against reactive oxygen species thanks to its pseudoperoxidase activity. The polypeptide is Myoglobin (MB) (Osphranter rufus (Red kangaroo)).